The chain runs to 919 residues: UPF0182 protein Tery_4385 (919 aa).

7 helical membrane passes run tyrosine 6–valine 26, isoleucine 52–isoleucine 72, isoleucine 96–alanine 116, tryptophan 160–glycine 180, threonine 198–glutamate 218, phenylalanine 243–valine 263, and isoleucine 268–leucine 288.

This sequence belongs to the UPF0182 family.

It localises to the cell membrane. This is UPF0182 protein Tery_4385 from Trichodesmium erythraeum (strain IMS101).